Reading from the N-terminus, the 849-residue chain is Protein translocase subunit SecA (849 aa).

ATP contacts are provided by residues Gln-85, 103–107 (GEGKT), and Asp-493. Residues Cys-832, Cys-834, Cys-843, and His-844 each coordinate Zn(2+).

Belongs to the SecA family. In terms of assembly, monomer and homodimer. Part of the essential Sec protein translocation apparatus which comprises SecA, SecYEG and auxiliary proteins SecDF. Other proteins may also be involved. The cofactor is Zn(2+).

The protein localises to the cell membrane. The protein resides in the cytoplasm. The catalysed reaction is ATP + H2O + cellular proteinSide 1 = ADP + phosphate + cellular proteinSide 2.. Functionally, part of the Sec protein translocase complex. Interacts with the SecYEG preprotein conducting channel. Has a central role in coupling the hydrolysis of ATP to the transfer of proteins into and across the cell membrane, serving as an ATP-driven molecular motor driving the stepwise translocation of polypeptide chains across the membrane. In Streptococcus thermophilus (strain ATCC BAA-491 / LMD-9), this protein is Protein translocase subunit SecA.